A 100-amino-acid polypeptide reads, in one-letter code: Co-chaperonin GroES (100 aa).

It belongs to the GroES chaperonin family. As to quaternary structure, heptamer of 7 subunits arranged in a ring. Interacts with the chaperonin GroEL.

The protein resides in the cytoplasm. Its function is as follows. Together with the chaperonin GroEL, plays an essential role in assisting protein folding. The GroEL-GroES system forms a nano-cage that allows encapsulation of the non-native substrate proteins and provides a physical environment optimized to promote and accelerate protein folding. GroES binds to the apical surface of the GroEL ring, thereby capping the opening of the GroEL channel. This chain is Co-chaperonin GroES, found in Mycolicibacterium vanbaalenii (strain DSM 7251 / JCM 13017 / BCRC 16820 / KCTC 9966 / NRRL B-24157 / PYR-1) (Mycobacterium vanbaalenii).